A 163-amino-acid polypeptide reads, in one-letter code: Nucleotide-binding protein APJL_1242 (163 aa).

Belongs to the YajQ family.

Its function is as follows. Nucleotide-binding protein. This Actinobacillus pleuropneumoniae serotype 3 (strain JL03) protein is Nucleotide-binding protein APJL_1242.